Consider the following 570-residue polypeptide: MPARISRATYAQMFGPTVGDKVRLADTDLIIEVERDLTTYGEEVKFGGGKVIRDGMGQSQLSRAEGAMDTVITNALILDHSGIYKADIGLLDGRIALIGKAGNPDTQPGISIIIGPGTEIIAGEGKIVTAGGIDTHVHFISPQQVDEALNAGITCMVGGGTGPAHGTLATTCTPGPWHIARLIQSFDGLPMNIGVFGKGNASLPGALEEMVRAGACGLKLHEDWGCTPAAIDNCLSVADHFDVQVAIHTDTLNEGGFVEDTLNAFKGRTIHSFHTEGAGGGHAPDIIRVCQYPNVLPASTNPTRPYTVNTIAEHLDMLMVCHHLSPAIPEDIAFAESRIRKETIAAEDILHDMGAFSIISSDSQAMGRVGEMIIRCWQTADKMKKQRGSLPDDRPGNDNYRARRYIAKYTINPAIAHGMAHEIGSVEVGKRADLVLWNPAFFGVKPDMVLLGGWIATAPMGDANGSIPTPQPMHTRPMFGSFGKALTNTSITFVSQAAMDEGLREKIGVDKQLVAVVNTRGGIGKHSMILNNAMPQMEVDPETYEVRADGELLTCEPVDVVPMAQRYFLF.

Residues 131–570 (GGIDTHVHFI…VPMAQRYFLF (440 aa)) form the Urease domain. Ni(2+)-binding residues include His136, His138, and Lys219. Residue Lys219 is modified to N6-carboxylysine. His221 serves as a coordination point for substrate. His248 and His274 together coordinate Ni(2+). Catalysis depends on His322, which acts as the Proton donor. Residue Asp362 participates in Ni(2+) binding.

It belongs to the metallo-dependent hydrolases superfamily. Urease alpha subunit family. In terms of assembly, heterotrimer of UreA (gamma), UreB (beta) and UreC (alpha) subunits. Three heterotrimers associate to form the active enzyme. It depends on Ni cation as a cofactor. Carboxylation allows a single lysine to coordinate two nickel ions.

The protein localises to the cytoplasm. It carries out the reaction urea + 2 H2O + H(+) = hydrogencarbonate + 2 NH4(+). It functions in the pathway nitrogen metabolism; urea degradation; CO(2) and NH(3) from urea (urease route): step 1/1. Functionally, may protect brucellae during their passage through the stomach. The major route of infection in human brucellosis is oral. In Brucella abortus (strain 2308), this protein is Urease subunit alpha 1.